The primary structure comprises 472 residues: Ribulose bisphosphate carboxylase large chain (472 aa).

Substrate contacts are provided by Asn-120 and Thr-170. The active-site Proton acceptor is the Lys-172. Lys-174 provides a ligand contact to substrate. 3 residues coordinate Mg(2+): Lys-198, Asp-200, and Glu-201. Lys-198 is modified (N6-carboxylysine). Catalysis depends on His-291, which acts as the Proton acceptor. 3 residues coordinate substrate: Arg-292, His-324, and Ser-376.

It belongs to the RuBisCO large chain family. Type I subfamily. As to quaternary structure, heterohexadecamer of 8 large chains and 8 small chains. The cofactor is Mg(2+).

The protein localises to the carboxysome. The catalysed reaction is 2 (2R)-3-phosphoglycerate + 2 H(+) = D-ribulose 1,5-bisphosphate + CO2 + H2O. It carries out the reaction D-ribulose 1,5-bisphosphate + O2 = 2-phosphoglycolate + (2R)-3-phosphoglycerate + 2 H(+). Its function is as follows. RuBisCO catalyzes two reactions: the carboxylation of D-ribulose 1,5-bisphosphate, the primary event in carbon dioxide fixation, as well as the oxidative fragmentation of the pentose substrate in the photorespiration process. Both reactions occur simultaneously and in competition at the same active site. The sequence is that of Ribulose bisphosphate carboxylase large chain from Gloeothece citriformis (strain PCC 7424) (Cyanothece sp. (strain PCC 7424)).